The primary structure comprises 94 residues: CRISPR-associated endoribonuclease Cas2 1 (94 aa).

D8 lines the Mg(2+) pocket.

Belongs to the CRISPR-associated endoribonuclease Cas2 protein family. In terms of assembly, homodimer, forms a heterotetramer with a Cas1 homodimer. The cofactor is Mg(2+).

Functionally, CRISPR (clustered regularly interspaced short palindromic repeat), is an adaptive immune system that provides protection against mobile genetic elements (viruses, transposable elements and conjugative plasmids). CRISPR clusters contain sequences complementary to antecedent mobile elements and target invading nucleic acids. CRISPR clusters are transcribed and processed into CRISPR RNA (crRNA). Functions as a ssRNA-specific endoribonuclease. Involved in the integration of spacer DNA into the CRISPR cassette. The protein is CRISPR-associated endoribonuclease Cas2 1 of Synechocystis sp. (strain ATCC 27184 / PCC 6803 / Kazusa).